A 142-amino-acid chain; its full sequence is Large ribosomal subunit protein uL11 (142 aa).

This sequence belongs to the universal ribosomal protein uL11 family. As to quaternary structure, part of the ribosomal stalk of the 50S ribosomal subunit. Interacts with L10 and the large rRNA to form the base of the stalk. L10 forms an elongated spine to which L12 dimers bind in a sequential fashion forming a multimeric L10(L12)X complex. In terms of processing, one or more lysine residues are methylated.

Its function is as follows. Forms part of the ribosomal stalk which helps the ribosome interact with GTP-bound translation factors. The sequence is that of Large ribosomal subunit protein uL11 from Dictyoglomus turgidum (strain DSM 6724 / Z-1310).